Reading from the N-terminus, the 911-residue chain is Facilitated trehalose transporter Tret1 (911 aa).

The segment at 1 to 256 (MSGRDNRGAG…RIGFQQQKAT (256 aa)) is disordered. The Cytoplasmic portion of the chain corresponds to 1 to 446 (MSGRDNRGAG…VYRPTTNPIY (446 aa)). The span at 8-19 (GAGGGGGGGGGG) shows a compositional bias: gly residues. The segment covering 32–50 (KLKEKLTRAGEELGYHRVE) has biased composition (basic and acidic residues). Composition is skewed to low complexity over residues 51 to 64 (SNLSTSNTGTSLDT), 76 to 129 (AAPQ…QQLR), and 156 to 166 (QQIHVQQQQQQ). Phosphoserine is present on residues S302, S303, and S304. The segment at 334–355 (VLQGSSTDSDEEGDDAEHKRLI) is disordered. A phosphoserine mark is found at S374 and S376. The interval 380 to 402 (FLTSRQNFQQQRSISTDSRKSRR) is disordered. The span at 384–395 (RQNFQQQRSIST) shows a compositional bias: polar residues. The chain crosses the membrane as a helical span at residues 447 to 467 (IWTQVLAALSVSLGSLVVGFA). Residues 468–494 (SAYTSPALVSMTNTNLTSFVVTPQAAS) lie on the Extracellular side of the membrane. N-linked (GlcNAc...) asparagine glycosylation occurs at N482. The chain crosses the membrane as a helical span at residues 495 to 515 (WVGGIMPLAGLAGGIAGGPFI). Residues 516-527 (EYLGRRNTILAT) lie on the Cytoplasmic side of the membrane. A helical membrane pass occupies residues 528-548 (AVPFIVSWLLIACAVNVIMVL). Residues 549-551 (CGR) lie on the Extracellular side of the membrane. The helical transmembrane segment at 552–572 (FLAGFCVGIASLSLPVYLGET) threads the bilayer. Residues 573–578 (VQPEVR) lie on the Cytoplasmic side of the membrane. The chain crosses the membrane as a helical span at residues 579-599 (GTLGLLPTAFGNIGILLCFVA). Residues 600-606 (GTYMDWS) are Extracellular-facing. Residues 607–627 (MLAFLGASLPVPFLILMFLIP) traverse the membrane as a helical segment. The Cytoplasmic segment spans residues 628–690 (ETPRWYVSRG…ELLKRSNLKP (63 aa)). The helical transmembrane segment at 691–711 (LSISLGLMFFQQLSGINAVIF) threads the bilayer. Topologically, residues 712–727 (YTVQIFQDAGSTIDGN) are extracellular. Residues 728-748 (VCTIIVGVVNFAATFIATILI) traverse the membrane as a helical segment. The Cytoplasmic portion of the chain corresponds to 749–754 (DRAGRK). Residues 755–775 (VLLYVSNVMMVLTLFVLGGFF) form a helical membrane-spanning segment. Residues 776 to 794 (YCKSSGMDTSNVGWLPLSC) are Extracellular-facing. The helical transmembrane segment at 795–815 (FVIYILGFSLGFGPIPWLMMG) threads the bilayer. The Cytoplasmic segment spans residues 816-821 (EILPAK). Residues 822 to 842 (IRGSAASVATAFNWSCTFVVT) traverse the membrane as a helical segment. Over 843–855 (KSFQDMIDFMGAH) the chain is Extracellular. A helical transmembrane segment spans residues 856-876 (GAFWMFGAICFIGLFFVIFYV). Over 877–911 (PETQGKTLEDIERKMMGRVRRMSSVANIKPLSFNM) the chain is Cytoplasmic. Phosphoserine is present on residues S899 and S900.

Belongs to the major facilitator superfamily. Sugar transporter (TC 2.A.1.1) family. Trehalose transporter subfamily.

Its subcellular location is the cell membrane. Low-capacity facilitative transporter for trehalose. Does not transport maltose, sucrose or lactose. Mediates the bidirectional transfer of trehalose. Responsible for the transport of trehalose synthesized in the fat body and the incorporation of trehalose into other tissues that require a carbon source, thereby regulating trehalose levels in the hemolymph. The polypeptide is Facilitated trehalose transporter Tret1 (Drosophila virilis (Fruit fly)).